The primary structure comprises 143 residues: MVKIIDNSEVYNLIKNVTDQLGIEIIEINTFKKRDEGRIQIVLYKGNDFGVDTLCDLHKMILLSLEVVLKYNFSLEISTPGINRKIKSDREFKIFEGRKIKLMLDNDFEEGLILKAEADGFIFKTDTKEIRILYSDVKKAKLS.

Belongs to the RimP family.

It is found in the cytoplasm. Its function is as follows. Required for maturation of 30S ribosomal subunits. The chain is Ribosome maturation factor RimP from Borrelia turicatae (strain 91E135).